Consider the following 402-residue polypeptide: Dihydrolipoyllysine-residue acetyltransferase component of pyruvate dehydrogenase complex (402 aa).

A Lipoyl-binding domain is found at 2–77 (ANEFKFTDVG…HIGQVMAVID (76 aa)). Lysine 43 bears the N6-lipoyllysine mark. 2 disordered regions span residues 82 to 110 (AAAP…APVT) and 143 to 172 (PQPT…PSGE). Composition is skewed to pro residues over residues 87–107 (APQP…PTPA) and 143–162 (PQPT…PTPA). The active site involves histidine 374.

It belongs to the 2-oxoacid dehydrogenase family. Forms a 24-polypeptide structural core with octahedral symmetry. It depends on (R)-lipoate as a cofactor.

The catalysed reaction is N(6)-[(R)-dihydrolipoyl]-L-lysyl-[protein] + acetyl-CoA = N(6)-[(R)-S(8)-acetyldihydrolipoyl]-L-lysyl-[protein] + CoA. Its function is as follows. The pyruvate dehydrogenase complex catalyzes the overall conversion of pyruvate to acetyl-CoA and CO(2). It contains multiple copies of three enzymatic components: pyruvate dehydrogenase (E1), dihydrolipoamide acetyltransferase (E2) and lipoamide dehydrogenase (E3). The sequence is that of Dihydrolipoyllysine-residue acetyltransferase component of pyruvate dehydrogenase complex (pdhC) from Mycoplasma pneumoniae (strain ATCC 29342 / M129 / Subtype 1) (Mycoplasmoides pneumoniae).